The chain runs to 2643 residues: Ankyrin repeat domain-containing protein 11 (2643 aa).

Disordered stretches follow at residues methionine 1–valine 90 and serine 128–threonine 170. Basic and acidic residues-rich tracts occupy residues methionine 21 to arginine 54 and glutamate 69 to valine 90. Residues serine 128 to serine 155 are compositionally biased toward polar residues. Residues lysine 156 to threonine 170 show a composition bias toward basic and acidic residues. ANK repeat units follow at residues arginine 167 to valine 196, alanine 200 to threonine 229, aspartate 233 to glutamine 262, and lysine 266 to serine 292. Serine 276 is modified (phosphoserine). A disordered region spans residues tyrosine 289–histidine 365. Residues serine 295–alanine 305 show a composition bias toward acidic residues. The span at alanine 309–aspartate 320 shows a compositional bias: polar residues. 2 stretches are compositionally biased toward basic and acidic residues: residues glutamate 322–glutamate 335 and aspartate 356–histidine 365. Serine 408 is subject to Phosphoserine. The residue at position 410 (threonine 410) is a Phosphothreonine. Position 411 is a phosphoserine (serine 411). Disordered stretches follow at residues glycine 423–glycine 504, serine 517–serine 651, and aspartate 727–lysine 805. Residues lysine 438–lysine 451 are compositionally biased toward basic and acidic residues. Positions asparagine 452–threonine 462 are enriched in basic residues. The segment covering lysine 463–lysine 475 has biased composition (basic and acidic residues). The segment covering glutamate 484–aspartate 494 has biased composition (acidic residues). A compositionally biased stretch (low complexity) spans serine 517–serine 528. The segment covering glycine 537–asparagine 550 has biased composition (basic and acidic residues). The segment covering proline 557–threonine 574 has biased composition (polar residues). A compositionally biased stretch (low complexity) spans serine 575 to serine 588. Basic residues-rich tracts occupy residues proline 591 to glycine 602 and valine 633 to glutamate 646. The residue at position 838 (serine 838) is a Phosphoserine. Composition is skewed to basic and acidic residues over residues lysine 918–lysine 931 and serine 938–glutamate 962. 3 disordered regions span residues lysine 918 to glutamate 962, serine 977 to aspartate 1037, and glutamate 1051 to leucine 1074. Position 1070 is a phosphoserine (serine 1070). Threonine 1111 carries the phosphothreonine modification. A Phosphoserine modification is found at serine 1114. 2 disordered regions span residues serine 1114–serine 1388 and leucine 1420–cysteine 1711. Composition is skewed to basic and acidic residues over residues aspartate 1133 to serine 1297, alanine 1326 to lysine 1343, lysine 1355 to serine 1388, leucine 1420 to lysine 1444, arginine 1464 to serine 1535, valine 1546 to glycine 1564, leucine 1577 to arginine 1587, and methionine 1595 to glutamate 1640. Residue serine 1676 is modified to Phosphoserine. The span at arginine 1678–serine 1695 shows a compositional bias: polar residues. Serine 1777 and serine 1832 each carry phosphoserine. 2 positions are modified to phosphotyrosine: tyrosine 1835 and tyrosine 1836. Phosphoserine occurs at positions 1837 and 1844. 3 disordered regions span residues proline 1863–leucine 1900, serine 1981–aspartate 2027, and histidine 2111–glutamine 2386. Residues serine 1981 and serine 2139 each carry the phosphoserine modification. Pro residues-rich tracts occupy residues proline 2150–proline 2160 and glutamate 2175–glutamate 2184. Positions serine 2273–glutamate 2284 are enriched in low complexity. Over residues proline 2297–proline 2315 the composition is skewed to basic and acidic residues. An important for protein degradation region spans residues alanine 2349–alanine 2643. Over residues arginine 2371–glutamine 2386 the composition is skewed to low complexity.

Interacts with the PAS region of the p160 coactivators. Post-translationally, subject to proteasomal degradation which is probably essential to regulate its activity.

The protein localises to the nucleus. Functionally, chromatin regulator which modulates histone acetylation and gene expression in neural precursor cells. May recruit histone deacetylases (HDACs) to the p160 coactivators/nuclear receptor complex to inhibit ligand-dependent transactivation. Has a role in proliferation and development of cortical neural precursors. May also regulate bone homeostasis. This is Ankyrin repeat domain-containing protein 11 from Mus musculus (Mouse).